Consider the following 661-residue polypeptide: MRGTQGAQEMKPELWPEPKPTSENLTSRGSGSYEKVLPSIPAACHTSSSSVCPRRKPRPRPQPRSRSRGGRGLKAPPPPPAKPPPPPPAPPPPPLPKQRSVAWRNSRRRSRPGPRPQTRKSYSSDHGSSRDSDGSENSLLEVGSNKGPTGCCHVESFKVAKNWQRNLRMIYQRFIWSGTPETRKRKAKSCICQICSTHKNRLHSCLSCVFFGCFTDKHIHIHAETTQHNLAVDLCHGVIYCFMCRDYVYDKDIEKIAKETKEKILGLLSSPTGDASYQQLMASEVEENQLTCESKDQETSLVKPKKKRRKKTMYYTVGFRGLINLGNTCFMNCIVQVLTHIPLLKEFFLSNKHKCMMTSPSLCLVCEMSLLFQAMYSGNQSPHIPYKLLHLIWIHAEHLAGYRQQDAQEFLIAILDVLHRHSRDDGIDQEGNSNCCNCIIDHIFTGSLQSDLTCQVCHGVSTTIDPCWDISLDLPGPYTPGRASSSTSSRDGQKPRVISLTDCLKWFTRPEDLGSSAKIKCSQCQSYQESTKQLTMKKLPIVACFHLKRFEHLGKQRRKINSFISFPLELDMTPFLASTKESIMKGQPLTECVPSENKYSLFAVINHHGTLESGHYTSFVRQEKDQWFSCDDAVVTKATMEELLNSEGYLLFYHRQDIEKE.

A disordered region spans residues 1-144 (MRGTQGAQEM…SENSLLEVGS (144 aa)). Residues 21 to 30 (TSENLTSRGS) are compositionally biased toward polar residues. Over residues 53-71 (PRRKPRPRPQPRSRSRGGR) the composition is skewed to basic residues. The segment covering 75-96 (APPPPPAKPPPPPPAPPPPPLP) has biased composition (pro residues). Residues 149-267 (TGCCHVESFK…KETKEKILGL (119 aa)) form a UBP-type zinc finger. Zn(2+)-binding residues include C151, H153, C192, C195, C205, C208, C213, H218, H222, H228, C241, and C244. Residues 320–656 (RGLINLGNTC…EGYLLFYHRQ (337 aa)) form the USP domain. C329 functions as the Nucleophile in the catalytic mechanism. H615 functions as the Proton acceptor in the catalytic mechanism.

Belongs to the peptidase C19 family. In terms of assembly, interacts with H2A.

Its subcellular location is the chromosome. It catalyses the reaction Thiol-dependent hydrolysis of ester, thioester, amide, peptide and isopeptide bonds formed by the C-terminal Gly of ubiquitin (a 76-residue protein attached to proteins as an intracellular targeting signal).. Specifically deubiquitinates 'Lys-14' (H2AK13Ub) and 'Lys-16'(H2AK15Ub) of histone H2A regulating the DNA damage response at double-strand breaks (DSBs). USP51 is recruited to chromatin after DNA damage and regulates the dynamic assembly/disassembly of TP53BP1 and BRCA1. Functions in DNA double-strand break repair also by mediating the deubiquitination and subsequent stabilization of DGCR8, leading to the recruitment of DGCR8 binding partners to double strand breaks such as RNF168 or MDC1. In addition, promotes the deubiquitination and stabilization of the transcriptional repressor ZEB1. This Mus musculus (Mouse) protein is Ubiquitin carboxyl-terminal hydrolase 51.